Reading from the N-terminus, the 497-residue chain is Probable malate:quinone oxidoreductase (497 aa).

The protein belongs to the MQO family. Requires FAD as cofactor.

The catalysed reaction is (S)-malate + a quinone = a quinol + oxaloacetate. It functions in the pathway carbohydrate metabolism; tricarboxylic acid cycle; oxaloacetate from (S)-malate (quinone route): step 1/1. This Hahella chejuensis (strain KCTC 2396) protein is Probable malate:quinone oxidoreductase.